The sequence spans 584 residues: DNA mismatch repair protein MutL (584 aa).

It belongs to the DNA mismatch repair MutL/HexB family.

This protein is involved in the repair of mismatches in DNA. It is required for dam-dependent methyl-directed DNA mismatch repair. May act as a 'molecular matchmaker', a protein that promotes the formation of a stable complex between two or more DNA-binding proteins in an ATP-dependent manner without itself being part of a final effector complex. This Syntrophomonas wolfei subsp. wolfei (strain DSM 2245B / Goettingen) protein is DNA mismatch repair protein MutL.